The sequence spans 367 residues: Phosphoribosylaminoimidazole-succinocarboxamide synthase (367 aa).

Belongs to the SAICAR synthetase family.

The enzyme catalyses 5-amino-1-(5-phospho-D-ribosyl)imidazole-4-carboxylate + L-aspartate + ATP = (2S)-2-[5-amino-1-(5-phospho-beta-D-ribosyl)imidazole-4-carboxamido]succinate + ADP + phosphate + 2 H(+). It participates in purine metabolism; IMP biosynthesis via de novo pathway; 5-amino-1-(5-phospho-D-ribosyl)imidazole-4-carboxamide from 5-amino-1-(5-phospho-D-ribosyl)imidazole-4-carboxylate: step 1/2. The polypeptide is Phosphoribosylaminoimidazole-succinocarboxamide synthase (Shewanella halifaxensis (strain HAW-EB4)).